Reading from the N-terminus, the 377-residue chain is Nitric oxide reductase FlRd-NAD(+) reductase (377 aa).

It belongs to the FAD-dependent oxidoreductase family. The cofactor is FAD.

The protein localises to the cytoplasm. It carries out the reaction 2 reduced [nitric oxide reductase rubredoxin domain] + NAD(+) + H(+) = 2 oxidized [nitric oxide reductase rubredoxin domain] + NADH. The protein operates within nitrogen metabolism; nitric oxide reduction. Its function is as follows. One of at least two accessory proteins for anaerobic nitric oxide (NO) reductase. Reduces the rubredoxin moiety of NO reductase. This chain is Nitric oxide reductase FlRd-NAD(+) reductase, found in Salmonella enteritidis PT4 (strain P125109).